The following is a 305-amino-acid chain: N-acetylmuramic acid 6-phosphate etherase (305 aa).

The SIS domain occupies 61-224 (ISDALAKGGR…STGAMVKLGK (164 aa)). Glutamate 89 (proton donor) is an active-site residue. The active site involves glutamate 120.

This sequence belongs to the GCKR-like family. MurNAc-6-P etherase subfamily. As to quaternary structure, homodimer.

The enzyme catalyses N-acetyl-D-muramate 6-phosphate + H2O = N-acetyl-D-glucosamine 6-phosphate + (R)-lactate. The protein operates within amino-sugar metabolism; N-acetylmuramate degradation. In terms of biological role, specifically catalyzes the cleavage of the D-lactyl ether substituent of MurNAc 6-phosphate, producing GlcNAc 6-phosphate and D-lactate. The sequence is that of N-acetylmuramic acid 6-phosphate etherase from Synechocystis sp. (strain ATCC 27184 / PCC 6803 / Kazusa).